A 387-amino-acid polypeptide reads, in one-letter code: Short-chain dehydrogenase/reductase family 42E member 1 (387 aa).

Catalysis depends on Y149, which acts as the Proton acceptor. Residue K153 coordinates NAD(+). Transmembrane regions (helical) follow at residues 279-299 (LPIS…FVVG) and 365-385 (ILDV…LPVV).

This sequence belongs to the 3-beta-HSD family.

It localises to the membrane. This Danio rerio (Zebrafish) protein is Short-chain dehydrogenase/reductase family 42E member 1 (sdr42e1).